We begin with the raw amino-acid sequence, 121 residues long: Small ribosomal subunit protein uS13 (121 aa).

The segment at 92–121 (RRGLPVRGQKTKNNSRTRKGPRKTMANKKK) is disordered.

The protein belongs to the universal ribosomal protein uS13 family. Part of the 30S ribosomal subunit. Forms a loose heterodimer with protein S19. Forms two bridges to the 50S subunit in the 70S ribosome.

Its function is as follows. Located at the top of the head of the 30S subunit, it contacts several helices of the 16S rRNA. In the 70S ribosome it contacts the 23S rRNA (bridge B1a) and protein L5 of the 50S subunit (bridge B1b), connecting the 2 subunits; these bridges are implicated in subunit movement. Contacts the tRNAs in the A and P-sites. In Oceanobacillus iheyensis (strain DSM 14371 / CIP 107618 / JCM 11309 / KCTC 3954 / HTE831), this protein is Small ribosomal subunit protein uS13.